Here is a 369-residue protein sequence, read N- to C-terminus: Flagellar P-ring protein (369 aa).

Positions 1–23 (MRIASFFTVLLTLLTLNITPASA) are cleaved as a signal peptide.

This sequence belongs to the FlgI family. As to quaternary structure, the basal body constitutes a major portion of the flagellar organelle and consists of four rings (L,P,S, and M) mounted on a central rod.

It localises to the periplasm. The protein resides in the bacterial flagellum basal body. Assembles around the rod to form the L-ring and probably protects the motor/basal body from shearing forces during rotation. The chain is Flagellar P-ring protein from Pectobacterium atrosepticum (strain SCRI 1043 / ATCC BAA-672) (Erwinia carotovora subsp. atroseptica).